Reading from the N-terminus, the 190-residue chain is E3 ubiquitin-protein ligase RNF183 (190 aa).

Residues 1 to 159 (MSEPQGQELR…RECVRNPHFR (159 aa)) are Cytoplasmic-facing. Residues 13–60 (CPVCWNPFNNTFHTPKVLDCCHSFCVECLAHLSLVTPARRRLLCPLCR) form an RING-type zinc finger. The helical; Anchor for type IV membrane protein transmembrane segment at 160–180 (IFAYLMAVILSVTLLLIFSIF) threads the bilayer. The Lumenal portion of the chain corresponds to 181 to 190 (WTKQFFWGMG).

Interacts with FATE1. Interacts with SEC16A. Interacts with BCL2L1. In terms of processing, autoubiquitinated (in vitro). Highly expressed in the kidney and testis.

The protein resides in the endoplasmic reticulum membrane. The protein localises to the endoplasmic reticulum. Its subcellular location is the golgi apparatus. It localises to the cis-Golgi network membrane. It is found in the lysosome membrane. It catalyses the reaction S-ubiquitinyl-[E2 ubiquitin-conjugating enzyme]-L-cysteine + [acceptor protein]-L-lysine = [E2 ubiquitin-conjugating enzyme]-L-cysteine + N(6)-ubiquitinyl-[acceptor protein]-L-lysine.. Its pathway is protein modification; protein ubiquitination. Acts as an E3 ubiquitin ligase catalyzing the covalent attachment of ubiquitin moieties onto substrate proteins. Triggers apoptosis in response to prolonged ER stress by mediating the polyubiquitination and subsequent proteasomal degradation of BCL2L1. May collaborate with FATE1 to restrain BIK protein levels thus regulating apoptotic signaling. In Mus musculus (Mouse), this protein is E3 ubiquitin-protein ligase RNF183 (Rnf183).